The sequence spans 326 residues: MFFLHVRKYKHVIGGLLCLAGCFVISSCSSGRGNKSIDERIHILSMNRMIYDCVSRITGDRVKNIVLIDGSIDPHSYEMVKGDEDRMAISQLIFCNGLGLEHSASLRKHLEGNSKVIDLGARLLDKNCFVLLSEDGFPDPHIWTDMGVWISXVKEMASVLVQQIPQYAEEFQKNAEQILSEMEDLDRWAVRSLATIPEKNRYLVTGHNAFSYFTRRYLSSDEERESGNWKLRCMSPEGLSPEAQISIRDIMRVVEYICANDVGVVFLEDTLNQDALRKIVSCSKSGQKIRLAKSPLYSDNVCDNYFNTFQHNVRTITEELGGTVLE.

Positions 1 to 21 are cleaved as a signal peptide; the sequence is MFFLHVRKYKHVIGGLLCLAG. 4 residues coordinate Fe(2+): histidine 75, histidine 141, histidine 207, and aspartate 299.

Belongs to the bacterial solute-binding protein 9 family. Monomer.

The protein resides in the periplasm. In terms of biological role, part of the ATP-binding cassette (ABC) transport system YtgABCD involved in metal import. Binds Fe(2+), Mn(2+) and Ni(2+), with a preference for Fe(2+) and delivers them to the membrane permease for translocation into the cytoplasm. The protein is Metal-binding protein YtgA of Chlamydia muridarum (strain MoPn / Nigg).